A 254-amino-acid polypeptide reads, in one-letter code: 5'-nucleotidase SurE (254 aa).

4 residues coordinate a divalent metal cation: Asp8, Asp9, Ser38, and Asn91.

This sequence belongs to the SurE nucleotidase family. A divalent metal cation serves as cofactor.

It localises to the cytoplasm. The catalysed reaction is a ribonucleoside 5'-phosphate + H2O = a ribonucleoside + phosphate. Nucleotidase that shows phosphatase activity on nucleoside 5'-monophosphates. The polypeptide is 5'-nucleotidase SurE (Anaeromyxobacter sp. (strain Fw109-5)).